The sequence spans 457 residues: Argininosuccinate lyase (457 aa).

It belongs to the lyase 1 family. Argininosuccinate lyase subfamily.

Its subcellular location is the cytoplasm. The catalysed reaction is 2-(N(omega)-L-arginino)succinate = fumarate + L-arginine. It functions in the pathway amino-acid biosynthesis; L-arginine biosynthesis; L-arginine from L-ornithine and carbamoyl phosphate: step 3/3. The chain is Argininosuccinate lyase from Klebsiella pneumoniae subsp. pneumoniae (strain ATCC 700721 / MGH 78578).